The sequence spans 860 residues: MTEYTPMIKQYLEIKDKYQDAFLFFRLGDFYEMFFEDALNASQILEITLTGREGGTKEKIPMCGVPYHSASGYIDTLIEKGYKVAICEQVEDPKTTKGMVKREVVQLISPGTVMDERGLKAKENNYIASLYCYEGKEYGFAYSDLSTGELKSTVIEASEDRLINELTTLSTRELIVSSSEKEVLSDVMKEQLGLTFSVHEEDTIPAENEKLVTRHMSLSEKRAIGKLLHYLKETQKRDLGHLQQAVHYETSNYMKMDYYSKRNLELAESIRGKGRQGTLLWLLDNTQTAMGGRMLKQWIDRPLIDRKKIIERQNDVSELMAHFFERLELVENLKNVYDLERLAGRVAYGNVNARDLIQLRNSLYQIPRIRATLLSMSSESLTELAEQLDPCEELTEKLEEAIMDSAPISIREGGIIKDGYNSQLDTYRDASRNGKTWIAELERKERELTGIKTLKVGFNRVFGYYIEVTRANTHLLPEGRYERKQTLTNAERYITPELKEKEKLILDAEEKSMELEYQLFSEVREMVKDYIERLQKLAKSVSEIDCLQSFADISEKNHFIRPTLSEDGSLHVKQGRHPVVEKVMGAQSYVANDCDLDENREILLITGPNMSGKSTYMRQVALTAICAQVGCFVPAEEAILPIFDQIFTRIGAADDLIAGQSTFMVEMLEARNAIVHATKDSLILFDEIGRGTATYDGMALAQAIIEYIHENVHAKTLFSTHYHELTDLEKELRGLQNIHVSAVEENGKVVFLHKIKEGPADKSYGIHVAELAELPKSLIERASRILEQLENDDKKIIIASVKQPEEVHEEVQLSMFPLEPEKKASSKETKLLKEIASMNIMQMTPMDAMNKLYELQSKIH.

607-614 (GPNMSGKS) serves as a coordination point for ATP.

The protein belongs to the DNA mismatch repair MutS family.

This protein is involved in the repair of mismatches in DNA. It is possible that it carries out the mismatch recognition step. This protein has a weak ATPase activity. The protein is DNA mismatch repair protein MutS of Listeria monocytogenes serovar 1/2a (strain ATCC BAA-679 / EGD-e).